Consider the following 318-residue polypeptide: 2,4-dinitroanisole O-demethylase subunit beta (318 aa).

It belongs to the metallo-beta-lactamase superfamily. Part of the complex DnhAB composed of the 2,4-dinitroanisole O-demethylase alpha (DnhA) and beta (DnhB) subunits.

The enzyme catalyses 2,4-dinitroanisole + H2O = 2,4-dinitrophenol + methanol + H(+). Functionally, involved in the degradation of 2,4-dinitroanisole (DNAN), an insensitive munition ingredient used in explosive formulations as a replacement for 2,4,6-trinitrotoluene (TNT). Catalyzes the removal of the methyl group from 2,4-dinitroanisole (DNAN) to yield 2,4-dinitrophenol (2,4-DNP) and methanol. The chain is 2,4-dinitroanisole O-demethylase subunit beta from Nocardioides sp. (strain JS1661).